Reading from the N-terminus, the 804-residue chain is Phenylalanine--tRNA ligase beta subunit (804 aa).

In terms of domain architecture, tRNA-binding spans 39-147 (GEGLDSVVTA…PDCEPGQPVF (109 aa)). In terms of domain architecture, B5 spans 401–480 (LAERKVTLAV…RLNGYDNIPV (80 aa)). The Mg(2+) site is built by Asp458, Asp464, Glu467, and Glu468. The 94-residue stretch at 711-804 (SRFPQVARDS…LIAKLGAEIR (94 aa)) folds into the FDX-ACB domain.

Belongs to the phenylalanyl-tRNA synthetase beta subunit family. Type 1 subfamily. Tetramer of two alpha and two beta subunits. Requires Mg(2+) as cofactor.

It is found in the cytoplasm. It catalyses the reaction tRNA(Phe) + L-phenylalanine + ATP = L-phenylalanyl-tRNA(Phe) + AMP + diphosphate + H(+). The protein is Phenylalanine--tRNA ligase beta subunit of Syntrophotalea carbinolica (strain DSM 2380 / NBRC 103641 / GraBd1) (Pelobacter carbinolicus).